We begin with the raw amino-acid sequence, 122 residues long: Large ribosomal subunit protein uL18 (122 aa).

The protein belongs to the universal ribosomal protein uL18 family. Part of the 50S ribosomal subunit; part of the 5S rRNA/L5/L18/L25 subcomplex. Contacts the 5S and 23S rRNAs.

Functionally, this is one of the proteins that bind and probably mediate the attachment of the 5S RNA into the large ribosomal subunit, where it forms part of the central protuberance. This is Large ribosomal subunit protein uL18 from Agathobacter rectalis (strain ATCC 33656 / DSM 3377 / JCM 17463 / KCTC 5835 / VPI 0990) (Eubacterium rectale).